Reading from the N-terminus, the 854-residue chain is Fibronectin-binding protein PlpA (854 aa).

Positions 1–24 (MDNNQNNFNQPGQQGFDQYQQQSG) are enriched in low complexity. Residues 1–33 (MDNNQNNFNQPGQQGFDQYQQQSGALVSYGYDA) form a disordered region. The segment at 91-109 (QYNQQQNQGYEQQYDEYGN) is fibronectin-binding. Disordered stretches follow at residues 247 to 327 (YEQE…LEAP), 411 to 434 (SSNN…EDSN), 743 to 766 (TINP…QLPP), and 835 to 854 (IQPS…YNNR). The segment covering 258-267 (EPAHEQDLRE) has biased composition (basic and acidic residues). Polar residues-rich tracts occupy residues 311–320 (TVNQPDQTPI) and 411–428 (SSNN…TSNE). Residues 384–622 (NLEEIQKVKL…SSFQKALSEV (239 aa)) are a coiled coil. The span at 746-764 (PPQPQPQALPQPHPQPQQL) shows a compositional bias: pro residues.

The protein resides in the cell membrane. Functionally, binds immobilized fibronectin, specifically the gelatin/heparin-binding domain. The protein is Fibronectin-binding protein PlpA (plpA) of Mycoplasmoides gallisepticum (strain R(low / passage 15 / clone 2)) (Mycoplasma gallisepticum).